Reading from the N-terminus, the 175-residue chain is Interferon gamma (175 aa).

The signal sequence occupies residues 1–23; sequence MNATCCILALLLCLTQAISGCYC. The residue at position 24 (Gln-24) is a Pyrrolidone carboxylic acid. N-linked (GlcNAc...) asparagine glycosylation is found at Asn-39 and Asn-106.

Belongs to the type II (or gamma) interferon family. In terms of assembly, homodimer. Interacts with IFNGR1 (via extracellular domain); this interaction promotes IFNGR1 dimerization. In terms of tissue distribution, released primarily from activated T lymphocytes.

The protein localises to the secreted. In terms of biological role, type II interferon produced by immune cells such as T-cells and NK cells that plays crucial roles in antimicrobial, antiviral, and antitumor responses by activating effector immune cells and enhancing antigen presentation. Primarily signals through the JAK-STAT pathway after interaction with its receptor IFNGR1 to affect gene regulation. Upon IFNG binding, IFNGR1 intracellular domain opens out to allow association of downstream signaling components JAK2, JAK1 and STAT1, leading to STAT1 activation, nuclear translocation and transcription of IFNG-regulated genes. Many of the induced genes are transcription factors such as IRF1 that are able to further drive regulation of a next wave of transcription. Plays a role in class I antigen presentation pathway by inducing a replacement of catalytic proteasome subunits with immunoproteasome subunits. In turn, increases the quantity, quality, and repertoire of peptides for class I MHC loading. Increases the efficiency of peptide generation also by inducing the expression of activator PA28 that associates with the proteasome and alters its proteolytic cleavage preference. Up-regulates as well MHC II complexes on the cell surface by promoting expression of several key molecules such as cathepsins B/CTSB, H/CTSH, and L/CTSL. Participates in the regulation of hematopoietic stem cells during development and under homeostatic conditions by affecting their development, quiescence, and differentiation. In Peromyscus maniculatus (North American deer mouse), this protein is Interferon gamma (IFNG).